The sequence spans 525 residues: Chromosomal replication initiator protein DnaA (525 aa).

Residues 1–71 (MNDFWQHCSA…ADLAREFWNT (71 aa)) form a domain I, interacts with DnaA modulators region. The domain II stretch occupies residues 71 to 188 (TPIEVQFVLD…AEADSMYERS (118 aa)). A disordered region spans residues 160–181 (AAAGRRTWRPGPGAAPANGAEA). Over residues 169–181 (PGPGAAPANGAEA) the composition is skewed to low complexity. The segment at 189–405 (KLNPVLTFDN…GALRKILAYS (217 aa)) is domain III, AAA+ region. 4 residues coordinate ATP: Gly-233, Gly-235, Lys-236, and Thr-237. Residues 406-525 (KFHGREISIE…LHVLEQTLKG (120 aa)) form a domain IV, binds dsDNA region.

Belongs to the DnaA family. As to quaternary structure, oligomerizes as a right-handed, spiral filament on DNA at oriC.

It localises to the cytoplasm. Its function is as follows. Plays an essential role in the initiation and regulation of chromosomal replication. ATP-DnaA binds to the origin of replication (oriC) to initiate formation of the DNA replication initiation complex once per cell cycle. Binds the DnaA box (a 9 base pair repeat at the origin) and separates the double-stranded (ds)DNA. Forms a right-handed helical filament on oriC DNA; dsDNA binds to the exterior of the filament while single-stranded (ss)DNA is stabiized in the filament's interior. The ATP-DnaA-oriC complex binds and stabilizes one strand of the AT-rich DNA unwinding element (DUE), permitting loading of DNA polymerase. After initiation quickly degrades to an ADP-DnaA complex that is not apt for DNA replication. Binds acidic phospholipids. The polypeptide is Chromosomal replication initiator protein DnaA (Burkholderia vietnamiensis (strain G4 / LMG 22486) (Burkholderia cepacia (strain R1808))).